The following is a 572-amino-acid chain: Methionine--tRNA ligase (572 aa).

The 'HIGH' region signature appears at 11-21; it reads PYINGIKHLGN. C143, C146, C156, and C159 together coordinate Zn(2+). The 'KMSKS' region signature appears at 346-350; the sequence is QFSTS. T349 provides a ligand contact to ATP.

The protein belongs to the class-I aminoacyl-tRNA synthetase family. MetG type 1 subfamily. In terms of assembly, monomer. The cofactor is Zn(2+).

The protein resides in the cytoplasm. It carries out the reaction tRNA(Met) + L-methionine + ATP = L-methionyl-tRNA(Met) + AMP + diphosphate. Functionally, is required not only for elongation of protein synthesis but also for the initiation of all mRNA translation through initiator tRNA(fMet) aminoacylation. This is Methionine--tRNA ligase from Ruegeria pomeroyi (strain ATCC 700808 / DSM 15171 / DSS-3) (Silicibacter pomeroyi).